We begin with the raw amino-acid sequence, 251 residues long: 3-deoxy-manno-octulosonate cytidylyltransferase (251 aa).

Belongs to the KdsB family.

It localises to the cytoplasm. The catalysed reaction is 3-deoxy-alpha-D-manno-oct-2-ulosonate + CTP = CMP-3-deoxy-beta-D-manno-octulosonate + diphosphate. The protein operates within nucleotide-sugar biosynthesis; CMP-3-deoxy-D-manno-octulosonate biosynthesis; CMP-3-deoxy-D-manno-octulosonate from 3-deoxy-D-manno-octulosonate and CTP: step 1/1. It functions in the pathway bacterial outer membrane biogenesis; lipopolysaccharide biosynthesis. Activates KDO (a required 8-carbon sugar) for incorporation into bacterial lipopolysaccharide in Gram-negative bacteria. In Rhizobium etli (strain CIAT 652), this protein is 3-deoxy-manno-octulosonate cytidylyltransferase.